A 50-amino-acid chain; its full sequence is Defensin D4 (50 aa).

Disulfide bonds link Cys-3/Cys-50, Cys-14/Cys-35, Cys-20/Cys-44, and Cys-24/Cys-46.

In terms of tissue distribution, detected in seeds (at protein level).

It localises to the secreted. Functionally, antimicrobial peptide with antifungal activity. In Nigella sativa (Black cumin), this protein is Defensin D4.